Reading from the N-terminus, the 579-residue chain is Viral transcription factor IE2 (579 aa).

The segment covering Met1 to Pro11 has biased composition (basic and acidic residues). Disordered regions lie at residues Met1–Thr30 and Asp99–Lys161. Over residues Asp99–Pro133 the composition is skewed to polar residues. Residues Lys175 and Lys180 each participate in a glycyl lysine isopeptide (Lys-Gly) (interchain with G-Cter in SUMO) cross-link. Positions Cys199–Ile202 match the SUMO-interacting motif 1/SIM1 motif. Residues Ile200–Glu208 are non-covalent SUMO1 binding region (SIM). Residues Ser203 and Ser205 each carry the phosphoserine modification. The segment at Glu206–Glu335 is disordered. Low complexity-rich tracts occupy residues Arg216–Thr236, Ser259–Asp270, and Ala301–Gly316. The short motif at Ile409–Ile412 is the SUMO-interacting motif 1/SIM2 element. Positions Val500–Leu503 match the SUMO-interacting motif 1/SIM3 motif.

Belongs to the HHV-5 IE2 protein family. As to quaternary structure, interacts with host SUMO-modified form of TATA-binding protein (TBP)-associated factor 12/TAF12 in a SIM-dependent manner; this interaction increases the transactivation activity of IE2. Interacts with host CHAF1A. Interacts with several components of the host transcriptional machinery including TBP, TF2B and CREB1. Interacts with host DNA replication licensing factor MCM3. Interacts with host PLSCR1; this interaction inhibits IE2 transactivating activity. Post-translationally, phosphorylated by host CK2 at Ser-203 and Ser-205; leading to enhanced SUMOylation. In terms of processing, SUMOylated; SUMOylation is enhanced when IE2 is phosphorylated by host CK2. The sumoylation is necessary for efficient replication of the virus and thus for the function of this viral transcription factor.

Its subcellular location is the host nucleus. In terms of biological role, stimulates viral early and late gene expression and thus play a crucial role in the regulation of productive infection. Selectively drives host RNA Pol II transcription initiation at a subset of viral early-late and late promoters without substantially affecting Pol II transcription of expressed host genes. Mechanistically, forms a repressive complex at the major immediate-early promoter region involving direct association with host nucleosomes and TBP. Concerning activation, stimulates transcription by binding nearby, but not within, core promoter regions. In addition, activates quiescent cells to reenter the cell cycle and up-regulates several E2F-responsive genes, which are responsible for pushing the cell into S phase. In S-phase, inhibits cellular DNA synthesis and blocks further cell cycle progression. This chain is Viral transcription factor IE2 (UL122), found in Homo sapiens (Human).